The chain runs to 198 residues: Small ribosomal subunit protein uS4c (198 aa).

One can recognise an S4 RNA-binding domain in the interval 85 to 145 (LRLDATIFRL…PKKFTIILIC (61 aa)).

The protein belongs to the universal ribosomal protein uS4 family. In terms of assembly, part of the 30S ribosomal subunit.

The protein resides in the plastid. Its subcellular location is the apicoplast. Its function is as follows. One of the primary rRNA binding proteins, it binds directly to 16S rRNA where it nucleates assembly of the body of the 30S subunit. In Toxoplasma gondii, this protein is Small ribosomal subunit protein uS4c (rps4).